A 455-amino-acid chain; its full sequence is GTPase Der (455 aa).

EngA-type G domains are found at residues 4-169 (PVVA…PPKD) and 178-353 (IQLS…EQHR). GTP contacts are provided by residues 10-17 (GRPNVGKS), 57-61 (DTGGL), 120-123 (NKCE), 184-191 (GRPNVGKS), 231-235 (DTAGI), and 296-299 (NKWD). Residues 354-439 (RRVSTSVVNE…PVKLFWRGKQ (86 aa)) enclose the KH-like domain.

Belongs to the TRAFAC class TrmE-Era-EngA-EngB-Septin-like GTPase superfamily. EngA (Der) GTPase family. Associates with the 50S ribosomal subunit.

GTPase that plays an essential role in the late steps of ribosome biogenesis. In Synechococcus sp. (strain CC9311), this protein is GTPase Der.